A 149-amino-acid chain; its full sequence is Calmodulin (149 aa).

Ala-2 is subject to N-acetylalanine. 4 EF-hand domains span residues 8–43, 44–79, 81–116, and 117–149; these read EQIA…LGQN, PTEA…KMKD, DSEE…LGEK, and LTDE…MLAK. Asp-21, Asp-23, Asp-25, Cys-27, Glu-32, Asp-57, Asp-59, Asn-61, Thr-63, Glu-68, Asp-94, Asp-96, Asn-98, and Glu-105 together coordinate Ca(2+). The residue at position 116 (Lys-116) is an N6,N6,N6-trimethyllysine. 5 residues coordinate Ca(2+): Asp-130, Asp-132, Asp-134, Gln-136, and Glu-141.

This sequence belongs to the calmodulin family.

Calmodulin mediates the control of a large number of enzymes, ion channels and other proteins by Ca(2+). Among the enzymes to be stimulated by the calmodulin-Ca(2+) complex are a number of protein kinases and phosphatases. The chain is Calmodulin (CALM1) from Solanum lycopersicum (Tomato).